The sequence spans 429 residues: UDP-N-acetylglucosamine 1-carboxyvinyltransferase (429 aa).

22-23 (KN) is a phosphoenolpyruvate binding site. Residue Arg-102 participates in UDP-N-acetyl-alpha-D-glucosamine binding. Cys-126 (proton donor) is an active-site residue. The residue at position 126 (Cys-126) is a 2-(S-cysteinyl)pyruvic acid O-phosphothioketal. UDP-N-acetyl-alpha-D-glucosamine is bound by residues 131 to 135 (RPVDL), Asp-316, and Ile-338.

The protein belongs to the EPSP synthase family. MurA subfamily.

It is found in the cytoplasm. It carries out the reaction phosphoenolpyruvate + UDP-N-acetyl-alpha-D-glucosamine = UDP-N-acetyl-3-O-(1-carboxyvinyl)-alpha-D-glucosamine + phosphate. The protein operates within cell wall biogenesis; peptidoglycan biosynthesis. In terms of biological role, cell wall formation. Adds enolpyruvyl to UDP-N-acetylglucosamine. The sequence is that of UDP-N-acetylglucosamine 1-carboxyvinyltransferase from Nitrobacter hamburgensis (strain DSM 10229 / NCIMB 13809 / X14).